The chain runs to 459 residues: Alcohol acyl transferase 1 allele GSd (459 aa).

Residues H164 and N385 each act as proton acceptor in the active site.

Belongs to the plant acyltransferase family. In terms of tissue distribution, expressed at very low levels in the cortex and skin of ripe fruit.

In terms of biological role, involved in the biosynthesis of volatile esters which confer ripe apple fruit flavor. Alcohol acyl transferase that can use a wide range of alcohols as substrate to produce esters. The polypeptide is Alcohol acyl transferase 1 allele GSd (Malus domestica (Apple)).